Here is a 90-residue protein sequence, read N- to C-terminus: Probable Fe(2+)-trafficking protein (90 aa).

Belongs to the Fe(2+)-trafficking protein family. In terms of assembly, monomer.

In terms of biological role, could be a mediator in iron transactions between iron acquisition and iron-requiring processes, such as synthesis and/or repair of Fe-S clusters in biosynthetic enzymes. The protein is Probable Fe(2+)-trafficking protein of Serratia proteamaculans (strain 568).